Here is a 252-residue protein sequence, read N- to C-terminus: MILHAQAKHGKPGLPWLVFLHGFSGDCHEWQEVGEAFADYSRLYVDLPGHGGSATISVDGFDDVTGLLCKTLVSYNILNFWLVGYSLGGRVAMMAACQELAGLCGVVVEGGHPGLQNAEQRAERQRSDRQWAQRFRTEPLTAVFADWYQQPVFASLNDDQRRELVALRSNNNGATLAAMLEATSLAVQPDLRANLSARTFAFYYLCGERDSKFRALAAELAADCHVIPRAGHNAHRENPAGVIASLAQILRF.

It belongs to the AB hydrolase superfamily. MenH family. In terms of assembly, monomer.

It carries out the reaction 5-enolpyruvoyl-6-hydroxy-2-succinyl-cyclohex-3-ene-1-carboxylate = (1R,6R)-6-hydroxy-2-succinyl-cyclohexa-2,4-diene-1-carboxylate + pyruvate. It participates in quinol/quinone metabolism; 1,4-dihydroxy-2-naphthoate biosynthesis; 1,4-dihydroxy-2-naphthoate from chorismate: step 3/7. It functions in the pathway quinol/quinone metabolism; menaquinone biosynthesis. Catalyzes a proton abstraction reaction that results in 2,5-elimination of pyruvate from 2-succinyl-5-enolpyruvyl-6-hydroxy-3-cyclohexene-1-carboxylate (SEPHCHC) and the formation of 2-succinyl-6-hydroxy-2,4-cyclohexadiene-1-carboxylate (SHCHC). The protein is 2-succinyl-6-hydroxy-2,4-cyclohexadiene-1-carboxylate synthase of Escherichia coli O81 (strain ED1a).